The primary structure comprises 679 residues: Protein FAM178B (679 aa).

The interval 70–113 (PLDQGPRCPARRPCSPASAPAPTSPKKPKIQAPGETFPTDWSPP) is disordered. A compositionally biased stretch (low complexity) spans 75 to 90 (PRCPARRPCSPASAPA).

It belongs to the FAM178 family.

The protein is Protein FAM178B of Homo sapiens (Human).